Reading from the N-terminus, the 156-residue chain is Small ribosomal subunit protein uS7 (156 aa).

This sequence belongs to the universal ribosomal protein uS7 family. As to quaternary structure, part of the 30S ribosomal subunit. Contacts proteins S9 and S11.

One of the primary rRNA binding proteins, it binds directly to 16S rRNA where it nucleates assembly of the head domain of the 30S subunit. Is located at the subunit interface close to the decoding center, probably blocks exit of the E-site tRNA. This chain is Small ribosomal subunit protein uS7, found in Cronobacter sakazakii (strain ATCC BAA-894) (Enterobacter sakazakii).